Here is a 125-residue protein sequence, read N- to C-terminus: Large ribosomal subunit protein bL12 (125 aa).

This sequence belongs to the bacterial ribosomal protein bL12 family. Homodimer. Part of the ribosomal stalk of the 50S ribosomal subunit. Forms a multimeric L10(L12)X complex, where L10 forms an elongated spine to which 2 to 4 L12 dimers bind in a sequential fashion. Binds GTP-bound translation factors.

Forms part of the ribosomal stalk which helps the ribosome interact with GTP-bound translation factors. Is thus essential for accurate translation. In Rickettsia canadensis (strain McKiel), this protein is Large ribosomal subunit protein bL12.